The chain runs to 265 residues: Hemin import ATP-binding protein HmuV (265 aa).

Positions leucine 13–proline 249 constitute an ABC transporter domain. Glycine 45–serine 52 lines the ATP pocket.

The protein belongs to the ABC transporter superfamily. Heme (hemin) importer (TC 3.A.1.14.5) family. The complex is composed of two ATP-binding proteins (HmuV), two transmembrane proteins (HmuU) and a solute-binding protein (HmuT).

It is found in the cell inner membrane. Its function is as follows. Part of the ABC transporter complex HmuTUV involved in hemin import. Responsible for energy coupling to the transport system. The polypeptide is Hemin import ATP-binding protein HmuV (Photobacterium damselae subsp. damselae (Listonella damsela)).